We begin with the raw amino-acid sequence, 358 residues long: tRNA (guanine-N(7)-)-methyltransferase (358 aa).

The segment at 1-29 (MTPPPPKRQKRDEYRKATAEATSQSGASD) is disordered. S-adenosyl-L-methionine contacts are provided by residues Gly99 and 122–123 (EI). A compositionally biased stretch (low complexity) spans 151–186 (TATAASETPSQQQAQIDGKQANANAAADAASPAPST). The segment at 151–194 (TATAASETPSQQQAQIDGKQANANAAADAASPAPSTDTEHMPTT) is disordered. S-adenosyl-L-methionine contacts are provided by residues 209-210 (NT) and Cys229. Asp232 is an active-site residue. 330–332 (TEE) is an S-adenosyl-L-methionine binding site.

It belongs to the class I-like SAM-binding methyltransferase superfamily. TrmB family. Forms a complex with trm82.

It localises to the nucleus. The catalysed reaction is guanosine(46) in tRNA + S-adenosyl-L-methionine = N(7)-methylguanosine(46) in tRNA + S-adenosyl-L-homocysteine. It participates in tRNA modification; N(7)-methylguanine-tRNA biosynthesis. Its function is as follows. Catalyzes the formation of N(7)-methylguanine at position 46 (m7G46) in tRNA. This Aspergillus fumigatus (strain CBS 144.89 / FGSC A1163 / CEA10) (Neosartorya fumigata) protein is tRNA (guanine-N(7)-)-methyltransferase (trm8).